A 60-amino-acid polypeptide reads, in one-letter code: Large ribosomal subunit protein bL32 (60 aa).

This sequence belongs to the bacterial ribosomal protein bL32 family.

The chain is Large ribosomal subunit protein bL32 from Moorella thermoacetica (strain ATCC 39073 / JCM 9320).